A 284-amino-acid polypeptide reads, in one-letter code: 2-dehydro-3-deoxyphosphooctonate aldolase (284 aa).

This sequence belongs to the KdsA family.

Its subcellular location is the cytoplasm. It catalyses the reaction D-arabinose 5-phosphate + phosphoenolpyruvate + H2O = 3-deoxy-alpha-D-manno-2-octulosonate-8-phosphate + phosphate. It participates in carbohydrate biosynthesis; 3-deoxy-D-manno-octulosonate biosynthesis; 3-deoxy-D-manno-octulosonate from D-ribulose 5-phosphate: step 2/3. It functions in the pathway bacterial outer membrane biogenesis; lipopolysaccharide biosynthesis. This chain is 2-dehydro-3-deoxyphosphooctonate aldolase, found in Burkholderia multivorans (strain ATCC 17616 / 249).